The primary structure comprises 165 residues: 5-formyltetrahydrofolate cyclo-ligase (165 aa).

Residue 4-8 (KNSLR) coordinates ATP. Substrate contacts are provided by I51 and E56. 116 to 124 (RIGFGKGYY) contributes to the ATP binding site. D125 is a binding site for Mg(2+). Residues R126 and W154 each contribute to the ATP site. Residue D155 coordinates Mg(2+).

It belongs to the 5-formyltetrahydrofolate cyclo-ligase family. In terms of assembly, monomer or homodimer. Mg(2+) is required as a cofactor.

It localises to the cytoplasm. It carries out the reaction (6S)-5-formyl-5,6,7,8-tetrahydrofolate + ATP = (6R)-5,10-methenyltetrahydrofolate + ADP + phosphate. Functionally, involved in folate metabolism. Catalyzes the irreversible conversion of 5-formyltetrahydrofolate (5-FTHF) to yield 5,10-methenyltetrahydrofolate. This chain is 5-formyltetrahydrofolate cyclo-ligase, found in Mycoplasma genitalium (strain ATCC 33530 / DSM 19775 / NCTC 10195 / G37) (Mycoplasmoides genitalium).